Here is a 96-residue protein sequence, read N- to C-terminus: Small ribosomal subunit protein bS6 (96 aa).

Belongs to the bacterial ribosomal protein bS6 family.

Binds together with bS18 to 16S ribosomal RNA. This is Small ribosomal subunit protein bS6 from Streptococcus equi subsp. zooepidemicus (strain MGCS10565).